The sequence spans 259 residues: Probable ABC transporter permease protein RBE_1340 (259 aa).

5 helical membrane-spanning segments follow: residues 25 to 45, 49 to 69, 148 to 168, 195 to 215, and 237 to 257; these read IFSL…SLII, LFIG…SGAV, VIAA…IGVM, PIDV…ISII, and AVVN…ELFF.

The protein belongs to the MlaE permease family.

The protein localises to the cell inner membrane. Functionally, could be part of an ABC transporter complex. This Rickettsia bellii (strain RML369-C) protein is Probable ABC transporter permease protein RBE_1340.